The sequence spans 913 residues: Clumping factor B (913 aa).

The first 44 residues, 1–44 (MKKRIDYLSNKQNKYSIRRFTVGTTSVIVGATILFGIGNHQAQA), serve as a signal peptide directing secretion. Positions 15–26 (YSIRRFTVGTTS) match the YSIRK-G/S signaling motif motif. Polar residues-rich tracts occupy residues 44–61 (ASEQ…NASA) and 68–95 (MIET…NVDS). Positions 44-192 (ASEQSNDTTQ…QGTSKPSVRT (149 aa)) are disordered. A ligand binding A region region spans residues 45–542 (SEQSNDTTQS…GSADGDSAVN (498 aa)). Residues 96-119 (TTKPMSTQTSNTTTTEPASTNETP) are compositionally biased toward low complexity. Residues 120 to 189 (QPTAIKNQAT…SNAQGTSKPS (70 aa)) are compositionally biased toward polar residues. An MIDAS-like motif motif is present at residues 272–276 (DYSNS). The disordered stretch occupies residues 530–885 (YGGGSADGDS…ETGDKSENTN (356 aa)). The span at 545–555 (DPTPGPPVDPE) shows a compositional bias: pro residues. The segment covering 556–837 (PSPDPEPEPT…SDSDSDSDSD (282 aa)) has biased composition (acidic residues). Residues 841 to 852 (RVTPPNNEQKAP) are compositionally biased toward polar residues. Over residues 869–882 (HKTDALPETGDKSE) the composition is skewed to basic and acidic residues. The LPXTG sorting signal motif lies at 874–878 (LPETG). Thr877 carries the pentaglycyl murein peptidoglycan amidated threonine modification. A propeptide spans 878–913 (GDKSENTNATLFGAMMALLGSLLLFRKRKQDHKEKA) (removed by sortase).

Belongs to the serine-aspartate repeat-containing protein (SDr) family. In terms of processing, proteolytically cleaved by aureolysin (aur). This cleavage leads to the inactivation of ClfB.

It is found in the secreted. It localises to the cell wall. In terms of biological role, cell surface-associated protein implicated in virulence by promoting bacterial attachment to both alpha- and beta-chains of human fibrinogen and inducing the formation of bacterial clumps. This chain is Clumping factor B (clfB), found in Staphylococcus aureus (strain COL).